A 301-amino-acid chain; its full sequence is Olfactory receptor 10AG1 (301 aa).

Residues 1 to 16 are Extracellular-facing; sequence MEFVLLGFSDIPNLHW. A helical membrane pass occupies residues 17 to 37; the sequence is MLFSIFLLMYLMILMCNGIII. The Cytoplasmic portion of the chain corresponds to 38 to 45; it reads LLIKIHPA. The helical transmembrane segment at 46–66 threads the bilayer; it reads LQTPMYFFLSNFSLLEICYVT. Residues 67–90 are Extracellular-facing; that stretch reads IIIPRMLMDIWTQKGNISLFACAT. N-linked (GlcNAc...) asparagine glycosylation is present at Asn-82. A disulfide bridge links Cys-88 with Cys-180. A helical transmembrane segment spans residues 91-111; that stretch reads QMCFFLMLGGTECLLLTVMAY. Topologically, residues 112–130 are cytoplasmic; it reads DRYVAICKPLQYPLVMNHK. Residues 131–151 traverse the membrane as a helical segment; the sequence is VCIQLIIASWTITIPVVIGET. The Extracellular portion of the chain corresponds to 152 to 188; sequence CQIFLLPFCGTNTINHFFCDIPPILKLACGNIFVNEI. A helical membrane pass occupies residues 189–208; it reads TVHVVAVVFITVPFLLIVVS. Topologically, residues 209–228 are cytoplasmic; the sequence is YGKIISNILKLSSARGKAKA. Residues 229–249 form a helical membrane-spanning segment; that stretch reads FSTCSSHLIVVILFFGAGTIT. The Extracellular portion of the chain corresponds to 250-262; sequence YLQPKPHQFQRMG. The chain crosses the membrane as a helical span at residues 263–283; the sequence is KLISLFYTILIPTLNPIIYTL. Residues 284 to 301 lie on the Cytoplasmic side of the membrane; it reads RNKDIMVALRKLLAKLLT.

The protein belongs to the G-protein coupled receptor 1 family.

Its subcellular location is the cell membrane. In terms of biological role, odorant receptor. This chain is Olfactory receptor 10AG1 (OR10AG1), found in Homo sapiens (Human).